The sequence spans 309 residues: tRNA dimethylallyltransferase (309 aa).

An ATP-binding site is contributed by 13–20; the sequence is GPTAVGKS. 15 to 20 serves as a coordination point for substrate; it reads TAVGKS.

Belongs to the IPP transferase family. Monomer. Mg(2+) is required as a cofactor.

It catalyses the reaction adenosine(37) in tRNA + dimethylallyl diphosphate = N(6)-dimethylallyladenosine(37) in tRNA + diphosphate. Functionally, catalyzes the transfer of a dimethylallyl group onto the adenine at position 37 in tRNAs that read codons beginning with uridine, leading to the formation of N6-(dimethylallyl)adenosine (i(6)A). The protein is tRNA dimethylallyltransferase of Lacticaseibacillus casei (strain BL23) (Lactobacillus casei).